A 105-amino-acid polypeptide reads, in one-letter code: ATP-dependent Clp protease adapter protein ClpS (105 aa).

It belongs to the ClpS family. As to quaternary structure, binds to the N-terminal domain of the chaperone ClpA.

In terms of biological role, involved in the modulation of the specificity of the ClpAP-mediated ATP-dependent protein degradation. This is ATP-dependent Clp protease adapter protein ClpS from Aeromonas hydrophila subsp. hydrophila (strain ATCC 7966 / DSM 30187 / BCRC 13018 / CCUG 14551 / JCM 1027 / KCTC 2358 / NCIMB 9240 / NCTC 8049).